The chain runs to 64 residues: Alpha-conotoxin Lt14.1 (64 aa).

The N-terminal stretch at 1–20 (MKLSVMFIVFLMLTMPMTCA) is a signal peptide. The propeptide occupies 21-50 (GISRSATNGGEADVRAHDKAANLMALLQER). Intrachain disulfides connect Cys-52–Cys-60 and Cys-56–Cys-63. The residue at position 63 (Cys-63) is a Cysteine amide.

It belongs to the conotoxin L superfamily. Post-translationally, may contain a 4-hydroxyproline. As to expression, expressed by the venom duct.

It localises to the secreted. Its function is as follows. Alpha-conotoxins act on postsynaptic membranes, they bind to the nicotinic acetylcholine receptors (nAChR) and thus inhibit them. This synthetic peptide displays analgesic activity in a hot plate assay. Analgesia is also observed against second phase pain in formalin-induced inflammatory pain model, and in a rat model of mechanically-induced pain. Effects downstream of nAChR are inhibition of calcium influx, inhibition of ERK1/2 phosphorylation and inhibition of c-fos/NOS expression. Genes associated with drug dependence are not up-regulated by this toxin. Treatment with this toxin reversed morphine withdrawal symptoms in mice. This is Alpha-conotoxin Lt14.1 from Conus litteratus (Lettered cone).